The sequence spans 883 residues: Serine/threonine-protein kinase greatwall (883 aa).

The residue at position 1 (Met-1) is an N-acetylmethionine. The Protein kinase domain occupies 35–839 (FTIVKPISRG…IKELKCHPLF (805 aa)). ATP is bound by residues 41–49 (ISRGAFGKV) and Lys-62. Asp-156 acts as the Proton acceptor in catalysis. Thr-209 and Thr-224 each carry phosphothreonine. Phosphoserine occurs at positions 295, 373, and 456. A Phosphothreonine modification is found at Thr-523. 5 positions are modified to phosphoserine: Ser-555, Ser-559, Ser-634, Ser-661, and Ser-672. Position 726 is a phosphothreonine (Thr-726). Position 729 is a phosphoserine (Ser-729). The residue at position 745 (Thr-745) is a Phosphothreonine; by CDK1. Residues 840–883 (SDVDWENLQHQTMPFIPQPDDETDTSYFEARNNAQHLTVSGFSL) enclose the AGC-kinase C-terminal domain. 2 positions are modified to phosphoserine: Ser-879 and Ser-882.

The protein belongs to the protein kinase superfamily. AGC Ser/Thr protein kinase family. Post-translationally, phosphorylation at Thr-745 by CDK1 during M phase activates its kinase activity. Maximum phosphorylation occurs in prometaphase.

The protein resides in the cytoplasm. It is found in the cytoskeleton. It localises to the microtubule organizing center. Its subcellular location is the centrosome. The protein localises to the nucleus. The enzyme catalyses L-seryl-[protein] + ATP = O-phospho-L-seryl-[protein] + ADP + H(+). It carries out the reaction L-threonyl-[protein] + ATP = O-phospho-L-threonyl-[protein] + ADP + H(+). Serine/threonine kinase that plays a key role in M phase by acting as a regulator of mitosis entry and maintenance. Acts by promoting the inactivation of protein phosphatase 2A (PP2A) during M phase: does not directly inhibit PP2A but acts by mediating phosphorylation and subsequent activation of ARPP19 and ENSA at 'Ser-62' and 'Ser-67', respectively. ARPP19 and ENSA are phosphatase inhibitors that specifically inhibit the PPP2R2D (PR55-delta) subunit of PP2A. Inactivation of PP2A during M phase is essential to keep cyclin-B1-CDK1 activity high. Following DNA damage, it is also involved in checkpoint recovery by being inhibited. This is Serine/threonine-protein kinase greatwall (MASTL) from Canis lupus familiaris (Dog).